The following is a 67-amino-acid chain: Cell division protein ZapB (67 aa).

A coiled-coil region spans residues leucine 3 to valine 59.

This sequence belongs to the ZapB family. In terms of assembly, homodimer. The ends of the coiled-coil dimer bind to each other, forming polymers. Interacts with FtsZ.

It is found in the cytoplasm. Functionally, non-essential, abundant cell division factor that is required for proper Z-ring formation. It is recruited early to the divisome by direct interaction with FtsZ, stimulating Z-ring assembly and thereby promoting cell division earlier in the cell cycle. Its recruitment to the Z-ring requires functional FtsA or ZipA. This chain is Cell division protein ZapB, found in Shewanella woodyi (strain ATCC 51908 / MS32).